A 502-amino-acid chain; its full sequence is Xylulose kinase (502 aa).

A substrate-binding site is contributed by 82 to 83 (MH). The Proton acceptor role is filled by Asp-240.

This sequence belongs to the FGGY kinase family.

It catalyses the reaction D-xylulose + ATP = D-xylulose 5-phosphate + ADP + H(+). Its function is as follows. Catalyzes the phosphorylation of D-xylulose to D-xylulose 5-phosphate. The chain is Xylulose kinase from Levilactobacillus brevis (Lactobacillus brevis).